Here is a 186-residue protein sequence, read N- to C-terminus: Riboflavin kinase (186 aa).

Thr42 and Asn44 together coordinate Mg(2+). Glu123 (nucleophile) is an active-site residue.

It belongs to the flavokinase family. Zn(2+) serves as cofactor. Requires Mg(2+) as cofactor.

It catalyses the reaction riboflavin + ATP = FMN + ADP + H(+). Its pathway is cofactor biosynthesis; FMN biosynthesis; FMN from riboflavin (ATP route): step 1/1. In terms of biological role, catalyzes the phosphorylation of riboflavin (vitamin B2) to form flavin mononucleotide (FMN) coenzyme. The chain is Riboflavin kinase (FMN1) from Eremothecium gossypii (strain ATCC 10895 / CBS 109.51 / FGSC 9923 / NRRL Y-1056) (Yeast).